The following is a 163-amino-acid chain: Phosphopantetheine adenylyltransferase (163 aa).

Ser-9 lines the substrate pocket. ATP is bound by residues Ser-9 to Phe-10 and His-17. Residues Lys-41, Val-78, and Arg-92 each contribute to the substrate site. Residues Gly-93–Arg-95, Glu-103, and Ser-128–Thr-134 each bind ATP.

This sequence belongs to the bacterial CoaD family. Homohexamer. Requires Mg(2+) as cofactor.

The protein resides in the cytoplasm. It carries out the reaction (R)-4'-phosphopantetheine + ATP + H(+) = 3'-dephospho-CoA + diphosphate. It participates in cofactor biosynthesis; coenzyme A biosynthesis; CoA from (R)-pantothenate: step 4/5. In terms of biological role, reversibly transfers an adenylyl group from ATP to 4'-phosphopantetheine, yielding dephospho-CoA (dPCoA) and pyrophosphate. The polypeptide is Phosphopantetheine adenylyltransferase (Rhizobium meliloti (strain 1021) (Ensifer meliloti)).